Reading from the N-terminus, the 298-residue chain is Bifunctional protein FolD (298 aa).

NADP(+) is bound by residues 165-167 (GRG), S194, and I235.

It belongs to the tetrahydrofolate dehydrogenase/cyclohydrolase family. As to quaternary structure, homodimer.

It catalyses the reaction (6R)-5,10-methylene-5,6,7,8-tetrahydrofolate + NADP(+) = (6R)-5,10-methenyltetrahydrofolate + NADPH. The enzyme catalyses (6R)-5,10-methenyltetrahydrofolate + H2O = (6R)-10-formyltetrahydrofolate + H(+). It functions in the pathway one-carbon metabolism; tetrahydrofolate interconversion. Its function is as follows. Catalyzes the oxidation of 5,10-methylenetetrahydrofolate to 5,10-methenyltetrahydrofolate and then the hydrolysis of 5,10-methenyltetrahydrofolate to 10-formyltetrahydrofolate. In Amoebophilus asiaticus (strain 5a2), this protein is Bifunctional protein FolD.